Consider the following 417-residue polypeptide: NADH-quinone oxidoreductase subunit D (417 aa).

This sequence belongs to the complex I 49 kDa subunit family. In terms of assembly, NDH-1 is composed of 14 different subunits. Subunits NuoB, C, D, E, F, and G constitute the peripheral sector of the complex.

It localises to the cell inner membrane. The catalysed reaction is a quinone + NADH + 5 H(+)(in) = a quinol + NAD(+) + 4 H(+)(out). NDH-1 shuttles electrons from NADH, via FMN and iron-sulfur (Fe-S) centers, to quinones in the respiratory chain. The immediate electron acceptor for the enzyme in this species is believed to be ubiquinone. Couples the redox reaction to proton translocation (for every two electrons transferred, four hydrogen ions are translocated across the cytoplasmic membrane), and thus conserves the redox energy in a proton gradient. The sequence is that of NADH-quinone oxidoreductase subunit D from Francisella tularensis subsp. tularensis (strain FSC 198).